Consider the following 428-residue polypeptide: C4-dicarboxylate transport protein 1 (428 aa).

8 helical membrane passes run 5-27 (FYKILYVQVLAAIVIGVLLGHFE), 42-64 (IQLIKMVIGPIIFCTVVSGIAGM), 77-99 (ALLYFEVVSTFALVIGLVAGHIF), 150-167 (ILQILLIALLFGGALSAM), 188-210 (IVHVITRVAPIGAFGAMAFTIGK), 225-247 (TFYLTAIIFVVVVLGIIARLTGF), 314-336 (IFISQALNIELTLTQQLTILAVA), and 351-373 (FITLAATLAVVPTIPVAGMVLIL).

It belongs to the dicarboxylate/amino acid:cation symporter (DAACS) (TC 2.A.23) family.

It localises to the cell inner membrane. Functionally, responsible for the transport of dicarboxylates such as succinate, fumarate, and malate from the periplasm across the membrane. The chain is C4-dicarboxylate transport protein 1 (dctA1) from Ralstonia nicotianae (strain ATCC BAA-1114 / GMI1000) (Ralstonia solanacearum).